Reading from the N-terminus, the 161-residue chain is MKYDTSELCDIYQEDVNVVEPLFSNFGGRSSFGGQIITVKCFEDNGLLYDLLEQNGRGRVLLVDGGGSIRRALVDAELARLATQNEWEGLVIYGAVRQVDDLEELDIGIQAIAAIPVGAAGEGIGESDVRVNFGGVTFFSGDHLYADNTGIILSEDPLDIE.

The protein belongs to the RraA family. As to quaternary structure, homotrimer. Binds to both RNA-binding sites in the C-terminal region of Rne and to RhlB.

It localises to the cytoplasm. Functionally, globally modulates RNA abundance by binding to RNase E (Rne) and regulating its endonucleolytic activity. Can modulate Rne action in a substrate-dependent manner by altering the composition of the degradosome. Modulates RNA-binding and helicase activities of the degradosome. The chain is Regulator of ribonuclease activity A from Salmonella choleraesuis (strain SC-B67).